A 138-amino-acid polypeptide reads, in one-letter code: Acidic phospholipase A2 (138 aa).

The signal sequence occupies residues Met1 to Gly16. 7 cysteine pairs are disulfide-bonded: Cys42/Cys131, Cys44/Cys60, Cys59/Cys111, Cys65/Cys138, Cys66/Cys104, Cys73/Cys97, and Cys91/Cys102. Residues Tyr43, Gly45, and Gly47 each contribute to the Ca(2+) site. The active site involves His63. Asp64 lines the Ca(2+) pocket. Asp105 is a catalytic residue.

The protein belongs to the phospholipase A2 family. Group II subfamily. D49 sub-subfamily. Homodimer. The cofactor is Ca(2+). Expressed by the venom gland.

It localises to the secreted. The enzyme catalyses a 1,2-diacyl-sn-glycero-3-phosphocholine + H2O = a 1-acyl-sn-glycero-3-phosphocholine + a fatty acid + H(+). PLA2 catalyzes the calcium-dependent hydrolysis of the 2-acyl groups in 3-sn-phosphoglycerides. The chain is Acidic phospholipase A2 from Crotalus atrox (Western diamondback rattlesnake).